The chain runs to 87 residues: Apoptosis inducing factor BLCAP B (87 aa).

2 consecutive transmembrane segments (helical) span residues 19–39 and 43–63; these read PALWFSHSVFMGFYLLSFLLE and CTICALVFLGALFLICYSCWG.

The protein belongs to the BLCAP family.

The protein localises to the cytoplasm. It is found in the nucleus. The protein resides in the membrane. Its function is as follows. Acts as a tumor suppressor; induces growth arrest at G(1)/S checkpoint and apoptosis via RB1-dependent and p53/TP53- and NF-kappa-B-independent mechanisms. Modulates expression of genes involved in the regulation of proliferation, cell cycle and apoptosis. In Xenopus laevis (African clawed frog), this protein is Apoptosis inducing factor BLCAP B (blcap-b).